The sequence spans 592 residues: Probable 6-phosphofructo-2-kinase C222.13c (592 aa).

The tract at residues 1–80 (MSNTGSARTE…PANDVEKMEV (80 aa)) is disordered. Over residues 57–66 (SIFKREELTP) the composition is skewed to basic and acidic residues. 150-157 (GIPATGKS) serves as a coordination point for ATP. Catalysis depends on residues Asp-235 and Cys-266. Position 300 (Arg-300) interacts with beta-D-fructose 6-phosphate. His-527 acts as the Proton donor in catalysis.

The protein resides in the cytoplasm. The protein localises to the nucleus. It catalyses the reaction beta-D-fructose 6-phosphate + ATP = beta-D-fructose 2,6-bisphosphate + ADP + H(+). Its function is as follows. Synthesis of fructose 2,6-bisphosphate. This is Probable 6-phosphofructo-2-kinase C222.13c from Schizosaccharomyces pombe (strain 972 / ATCC 24843) (Fission yeast).